The primary structure comprises 555 residues: MRTSDSHLPLSNLARSDSIEFKDAVINEKWVHSANRRKGHLTPKAPEKKSGWFGGQKSEEELLMERVEQHELEELQTFIAQKLFRVDGIICDEETRILLVEKLMNAKEYPTINHDELAHRYGSSMAGWLRDRLVPSMSDCSSVLQRAAAEFYQNKMSDPLCNWGQLNPEHVSMVAARIAKFSEEMSSKVKWSLLVEPGKFSCHLTEFVQEFNRLDRMFVSNELSDEESLQTAFNANYLTKARSKMVPCAEFSRVKLNDGLGRLDDRNELRNGMFSDEHEFLQEEGYTAKSTYGTTDFIHANYVKGGPLLNTFICAQAPLKNTQEDFWRMVFQEKCQFIVMLNSAVDSSTLGPLDSANRNHCPYYWPRAENESLRFGSFHITCMKVDSKADPLFTITKLKVQKVGGNLLDAEFDEELFLEHWQWDWQYLGDVHWPFRVLRKARQLSTPTIVQCIDGCSKSGTLVSIETALMHFIRGSPITKSLILQSCVFVRLQRRLSVSSVLLYLFIYRVILRWIEPYVNKWYHRAALGLRFKSIGFIQKYNAMIQEFSRITPAY.

2 consecutive short sequence motifs (D-box) follow at residues 96–99 and 130–133; these read RILL and RDRL. The Tyrosine-protein phosphatase domain maps to 207-514; it reads FVQEFNRLDR…LFIYRVILRW (308 aa). Residues 253-256 carry the RXXL motif; required for cortical localization motif; the sequence is RVKL. The short motif at 266–269 is the RXXL motif element; it reads RNEL. 2 short sequence motifs (RXXL motif; required for cortical localization) span residues 509–512 and 525–528; these read RVIL and RAAL.

Belongs to the protein-tyrosine phosphatase family. In terms of assembly, part of a complex, consisting of pseudophosphatases egg-3, egg-4, egg-5 and kinase mbk-2; this complex is required for the oocyte-to-zygote transition. Interacts (via tyrosine-protein phosphatase domain) with kinase mbk-2 (via N-terminus); the interaction does not affect mbk-2 kinase activity, is enhanced by mbk-2 tyrosine phosphorylation status and requires prior binding of mbk-2 to egg-4 and egg-5. Interacts with egg-4.

It is found in the cytoplasm. The protein resides in the cell cortex. Probable pseudophosphatase required for the oocyte-to-zygote transition during which it regulates the polarized dispersal of the cortical actin cytoskeleton, the synthesis of the eggshell chitin layer and the formation of the polar bodies after meiosis I and II. Acts as a scaffold to tether kinase mbk-2 and pseudophosphatases egg-4 and egg-5 to the oocyte cortex and thus restricts mbk-2 activity to the cortex during meiosis I. Regulates mbk-2 localization to cytoplasmic foci during meiosis II. Also required for chitin synthase chs-1 localization to the cell cortex of unfertilized oocytes and to cytoplasmic foci in the fertilized embryo. This is Protein tyrosine phosphatase-like protein egg-3 from Caenorhabditis elegans.